The sequence spans 151 residues: UPF0178 protein PFLU_5917 (151 aa).

This sequence belongs to the UPF0178 family.

This chain is UPF0178 protein PFLU_5917, found in Pseudomonas fluorescens (strain SBW25).